The chain runs to 427 residues: 3-phosphoshikimate 1-carboxyvinyltransferase (427 aa).

3-phosphoshikimate-binding residues include Lys-20, Ser-21, and Arg-25. Lys-20 provides a ligand contact to phosphoenolpyruvate. Residues Gly-92 and Arg-120 each contribute to the phosphoenolpyruvate site. Ser-166, Gln-168, Asp-312, and Lys-339 together coordinate 3-phosphoshikimate. Residue Gln-168 participates in phosphoenolpyruvate binding. Asp-312 functions as the Proton acceptor in the catalytic mechanism. Residues Arg-343 and Arg-385 each coordinate phosphoenolpyruvate.

Belongs to the EPSP synthase family. In terms of assembly, monomer.

It is found in the cytoplasm. The enzyme catalyses 3-phosphoshikimate + phosphoenolpyruvate = 5-O-(1-carboxyvinyl)-3-phosphoshikimate + phosphate. Its pathway is metabolic intermediate biosynthesis; chorismate biosynthesis; chorismate from D-erythrose 4-phosphate and phosphoenolpyruvate: step 6/7. Catalyzes the transfer of the enolpyruvyl moiety of phosphoenolpyruvate (PEP) to the 5-hydroxyl of shikimate-3-phosphate (S3P) to produce enolpyruvyl shikimate-3-phosphate and inorganic phosphate. This is 3-phosphoshikimate 1-carboxyvinyltransferase from Streptococcus agalactiae serotype III (strain NEM316).